Reading from the N-terminus, the 96-residue chain is Cysteine protease immunity 1 (96 aa).

This Escherichia coli O1:K1:H7 (strain ATCC 11775 / DSM 30083 / JCM 1649 / NBRC 102203 / NCTC 9001 / U5/41) protein is Cysteine protease immunity 1.